We begin with the raw amino-acid sequence, 631 residues long: DNA mismatch repair protein MutL (631 aa).

The protein belongs to the DNA mismatch repair MutL/HexB family.

This protein is involved in the repair of mismatches in DNA. It is required for dam-dependent methyl-directed DNA mismatch repair. May act as a 'molecular matchmaker', a protein that promotes the formation of a stable complex between two or more DNA-binding proteins in an ATP-dependent manner without itself being part of a final effector complex. This chain is DNA mismatch repair protein MutL, found in Mannheimia succiniciproducens (strain KCTC 0769BP / MBEL55E).